The chain runs to 434 residues: 3-phosphoshikimate 1-carboxyvinyltransferase (434 aa).

Residues lysine 22, serine 23, and arginine 27 each contribute to the 3-phosphoshikimate site. Residue lysine 22 coordinates phosphoenolpyruvate. Residues glycine 93 and arginine 121 each coordinate phosphoenolpyruvate. 3-phosphoshikimate contacts are provided by serine 168, serine 169, glutamine 170, serine 199, aspartate 320, and lysine 347. Residue glutamine 170 coordinates phosphoenolpyruvate. Residue aspartate 320 is the Proton acceptor of the active site. The phosphoenolpyruvate site is built by arginine 351, arginine 394, and lysine 419.

Belongs to the EPSP synthase family. In terms of assembly, monomer.

The protein resides in the cytoplasm. The enzyme catalyses 3-phosphoshikimate + phosphoenolpyruvate = 5-O-(1-carboxyvinyl)-3-phosphoshikimate + phosphate. It participates in metabolic intermediate biosynthesis; chorismate biosynthesis; chorismate from D-erythrose 4-phosphate and phosphoenolpyruvate: step 6/7. In terms of biological role, catalyzes the transfer of the enolpyruvyl moiety of phosphoenolpyruvate (PEP) to the 5-hydroxyl of shikimate-3-phosphate (S3P) to produce enolpyruvyl shikimate-3-phosphate and inorganic phosphate. This chain is 3-phosphoshikimate 1-carboxyvinyltransferase, found in Paraburkholderia phytofirmans (strain DSM 17436 / LMG 22146 / PsJN) (Burkholderia phytofirmans).